The following is a 120-amino-acid chain: MASRKEALARRANRVRRHLKSVANGRPRLSVHRSSKNIYAQVIDDVAGKTLAAASTLDKDLRGSLKTGADTAAAALVGKLVAERASKAGVTDVVFDRGAFIYHGRIKALADAAREGGLTF.

This sequence belongs to the universal ribosomal protein uL18 family. Part of the 50S ribosomal subunit; part of the 5S rRNA/L5/L18/L25 subcomplex. Contacts the 5S and 23S rRNAs.

Functionally, this is one of the proteins that bind and probably mediate the attachment of the 5S RNA into the large ribosomal subunit, where it forms part of the central protuberance. The chain is Large ribosomal subunit protein uL18 from Rhizobium leguminosarum bv. trifolii (strain WSM2304).